The sequence spans 947 residues: Translation initiation factor IF-2 (947 aa).

The disordered stretch occupies residues 47–332 (LRESFGGGKS…RGRKSKRAKR (286 aa)). Over residues 86 to 95 (APDRSLDAAL) the composition is skewed to basic and acidic residues. Positions 105–123 (APVPAPAPAPTPAPAPAPA) are enriched in pro residues. Positions 131–145 (APPAATPAAPAASAA) are enriched in low complexity. Pro residues-rich tracts occupy residues 146–171 (PAPP…PQAP) and 210–225 (PRPQ…PGAP). Residues 255–318 (RPGGGRPGGP…GAAGAFGRPG (64 aa)) show a composition bias toward gly residues. Residues 322–331 (RRGRKSKRAK) are compositionally biased toward basic residues. One can recognise a tr-type G domain in the interval 443 to 614 (TRPPVVTVMG…AVLLTADAAL (172 aa)). The tract at residues 452-459 (GHVDHGKT) is G1. 452–459 (GHVDHGKT) is a GTP binding site. The segment at 477 to 481 (GITQH) is G2. The G3 stretch occupies residues 502–505 (DTPG). GTP-binding positions include 502–506 (DTPGH) and 556–559 (NKID). The segment at 556-559 (NKID) is G4. The tract at residues 592 to 594 (SAK) is G5.

This sequence belongs to the TRAFAC class translation factor GTPase superfamily. Classic translation factor GTPase family. IF-2 subfamily.

It localises to the cytoplasm. Functionally, one of the essential components for the initiation of protein synthesis. Protects formylmethionyl-tRNA from spontaneous hydrolysis and promotes its binding to the 30S ribosomal subunits. Also involved in the hydrolysis of GTP during the formation of the 70S ribosomal complex. This is Translation initiation factor IF-2 from Mycobacterium marinum (strain ATCC BAA-535 / M).